The chain runs to 419 residues: Phosphoglycerate kinase (419 aa).

Substrate contacts are provided by residues 42–44 (DLN), R58, 81–84 (HLGR), R135, and R168. ATP contacts are provided by residues K219, E341, and 367-370 (GGDT).

The protein belongs to the phosphoglycerate kinase family. As to quaternary structure, monomer.

The protein resides in the cytoplasm. The catalysed reaction is (2R)-3-phosphoglycerate + ATP = (2R)-3-phospho-glyceroyl phosphate + ADP. Its pathway is carbohydrate degradation; glycolysis; pyruvate from D-glyceraldehyde 3-phosphate: step 2/5. This is Phosphoglycerate kinase from Ralstonia nicotianae (strain ATCC BAA-1114 / GMI1000) (Ralstonia solanacearum).